We begin with the raw amino-acid sequence, 174 residues long: Cytoglobin-1 (174 aa).

Positions 15–165 (SLTEEDVCVI…LYWQMNRVYA (151 aa)) constitute a Globin domain. Heme b-binding residues include His-78 and His-110.

It belongs to the globin family. In terms of assembly, monomeric. As to expression, expressed in all tissues examined with highest levels in brain, eye, gut and heart.

It localises to the cytoplasm. The protein localises to the nucleus. The catalysed reaction is Fe(II)-heme b-[protein] + nitric oxide + O2 = Fe(III)-heme b-[protein] + nitrate. It catalyses the reaction Fe(III)-heme b-[protein] + nitric oxide + H2O = Fe(II)-heme b-[protein] + nitrite + 2 H(+). It carries out the reaction 2 superoxide + 2 H(+) = H2O2 + O2. The enzyme catalyses H2O2 + AH2 = A + 2 H2O. Its function is as follows. Probable multifunctional globin with a hexacoordinated heme iron required for the catalysis of various reactions depending on redox condition of the cell as well as oxygen availability. Has a nitric oxide dioxygenase (NOD) activity and is most probably involved in cell-mediated and oxygen-dependent nitric oxide consumption. Under normoxic conditions functions as a nitric oxide dioxygenase (NOD) but under hypoxic conditions the globin may switch its function to that of a nitrite (NO2) reductase (NiR), generating nitric oxide. Could also have peroxidase and superoxide dismutase activities, detoxifying reactive oxygen species and protecting cells against oxidative stress. Also binds dioxygen with low affinity and could function as an oxygen sensor but has probably no function as a respiratory oxygen carrier. This Danio rerio (Zebrafish) protein is Cytoglobin-1 (cygb1).